Consider the following 249-residue polypeptide: Glutathione S-transferase tcpG (249 aa).

The GST N-terminal domain occupies 20-109 (LYVRKAIPAP…YLCDKHDKDG (90 aa)). In terms of domain architecture, GST C-terminal spans 115–249 (NATERAQVTS…TEEEIELHGR (135 aa)).

The protein belongs to the GST superfamily.

It catalyses the reaction RX + glutathione = an S-substituted glutathione + a halide anion + H(+). It participates in secondary metabolite biosynthesis. In terms of biological role, glutathione S-transferase; part of the gene cluster that mediates the biosynthesis of an unusual class of epipolythiodioxopiperazines (ETPs) lacking the reactive thiol group important for toxicity. Firstly, L-tyrosine is prenylated by tcpD, before undergoing condensation with L-glycine in a reaction catalyzed by the NRPS tcpP leading to the diketopiperazine (DKP) backbone. Afterwards the alpha-carbon of tyrosine is oxidized by the cytochrome P450 tcpC to form a hydroxyl group. However, in contrast other ETP biosynthesis pathways studied so far, tcpC is not able to bishydroxylate the DKP at both alpha-carbon positions, but hydroxylates the alpha-carbon of the tyrosine part and the nitrogen of the glycine part. The next steps involve an alpha,beta-elimination reaction catalyzed by tcpI, a methylation by the methyltransferase tcpN the action of the four enzyme cascade tcpG/K/J/I. Due to a dysfunctional cytochrome P450 monooxygenase tcpC, the pathway leads to the biosynthesis of probable non-toxic metabolites lacking the reactive thiol group. This chain is Glutathione S-transferase tcpG, found in Claviceps purpurea (strain 20.1) (Ergot fungus).